The chain runs to 282 residues: Biotin synthase (282 aa).

In terms of domain architecture, Radical SAM core spans 1-228 (MQEIFLCSIS…NARLMVAGGR (228 aa)). 3 residues coordinate [4Fe-4S] cluster: cysteine 17, cysteine 21, and cysteine 24. [2Fe-2S] cluster-binding residues include cysteine 61, cysteine 96, cysteine 154, and arginine 221.

This sequence belongs to the radical SAM superfamily. Biotin synthase family. As to quaternary structure, homodimer. [4Fe-4S] cluster is required as a cofactor. Requires [2Fe-2S] cluster as cofactor.

The enzyme catalyses (4R,5S)-dethiobiotin + (sulfur carrier)-SH + 2 reduced [2Fe-2S]-[ferredoxin] + 2 S-adenosyl-L-methionine = (sulfur carrier)-H + biotin + 2 5'-deoxyadenosine + 2 L-methionine + 2 oxidized [2Fe-2S]-[ferredoxin]. The protein operates within cofactor biosynthesis; biotin biosynthesis; biotin from 7,8-diaminononanoate: step 2/2. Catalyzes the conversion of dethiobiotin (DTB) to biotin by the insertion of a sulfur atom into dethiobiotin via a radical-based mechanism. This is Biotin synthase from Helicobacter pylori (strain ATCC 700392 / 26695) (Campylobacter pylori).